The chain runs to 469 residues: 3-isopropylmalate dehydratase large subunit (469 aa).

Positions 350, 410, and 413 each coordinate [4Fe-4S] cluster.

This sequence belongs to the aconitase/IPM isomerase family. LeuC type 1 subfamily. Heterodimer of LeuC and LeuD. The cofactor is [4Fe-4S] cluster.

It catalyses the reaction (2R,3S)-3-isopropylmalate = (2S)-2-isopropylmalate. The protein operates within amino-acid biosynthesis; L-leucine biosynthesis; L-leucine from 3-methyl-2-oxobutanoate: step 2/4. Catalyzes the isomerization between 2-isopropylmalate and 3-isopropylmalate, via the formation of 2-isopropylmaleate. In Rhodopseudomonas palustris (strain ATCC BAA-98 / CGA009), this protein is 3-isopropylmalate dehydratase large subunit.